A 147-amino-acid chain; its full sequence is Phosphoribosyl-AMP cyclohydrolase (147 aa).

Asp-89 is a binding site for Mg(2+). A Zn(2+)-binding site is contributed by Cys-90. Mg(2+) contacts are provided by Asp-91 and Asp-93. Zn(2+)-binding residues include Cys-106 and Cys-113.

The protein belongs to the PRA-CH family. As to quaternary structure, homodimer. Requires Mg(2+) as cofactor. The cofactor is Zn(2+).

It localises to the cytoplasm. It carries out the reaction 1-(5-phospho-beta-D-ribosyl)-5'-AMP + H2O = 1-(5-phospho-beta-D-ribosyl)-5-[(5-phospho-beta-D-ribosylamino)methylideneamino]imidazole-4-carboxamide. The protein operates within amino-acid biosynthesis; L-histidine biosynthesis; L-histidine from 5-phospho-alpha-D-ribose 1-diphosphate: step 3/9. In terms of biological role, catalyzes the hydrolysis of the adenine ring of phosphoribosyl-AMP. This is Phosphoribosyl-AMP cyclohydrolase from Nitrobacter hamburgensis (strain DSM 10229 / NCIMB 13809 / X14).